Here is a 596-residue protein sequence, read N- to C-terminus: Nitrite reductase (596 aa).

Residues 1–29 (MRQRTPFARPGLLASAALALVLGPLAASA) form the signal peptide. An N-terminal tail region spans residues 30–76 (QEQVAPPKDPAAALEDHKTRTDNRYEPSLDNLAQQDVAAPGAPEGVS). A heme c-binding site is contributed by histidine 46. Heme d1 is bound by residues tyrosine 54 and serine 57. The 86-residue stretch at 77–162 (ALSDAQYNEA…ANYLLLDPAA (86 aa)) folds into the Cytochrome c domain. 5 residues coordinate heme c: cysteine 94, cysteine 97, histidine 98, lysine 108, and tyrosine 122. Heme d1 is bound by residues tryptophan 138, arginine 203, histidine 229, arginine 232, arginine 245, arginine 272, tyrosine 292, arginine 420, glutamine 536, and threonine 583. A D1-heme domain region spans residues 163-596 (PPEFGMKEMR…NVYNTMTDTY (434 aa)).

In terms of assembly, homodimer. Heme c is required as a cofactor. The cofactor is heme.

Its subcellular location is the periplasm. The catalysed reaction is nitric oxide + Fe(III)-[cytochrome c] + H2O = Fe(II)-[cytochrome c] + nitrite + 2 H(+). It catalyses the reaction A + NH4(+) + H2O = hydroxylamine + AH2 + H(+). The sequence is that of Nitrite reductase (nirS) from Paracoccus pantotrophus (Thiosphaera pantotropha).